A 141-amino-acid chain; its full sequence is Nucleoside triphosphatase NudI (141 aa).

One can recognise a Nudix hydrolase domain in the interval 1 to 141 (MRQRTIVCPL…RHTLALKGLL (141 aa)). The Nudix box signature appears at 38-59 (GGVEPGERIEEALRREIREELG).

Belongs to the Nudix hydrolase family. NudI subfamily. As to quaternary structure, monomer. It depends on Mg(2+) as a cofactor.

It carries out the reaction a ribonucleoside 5'-triphosphate + H2O = a ribonucleoside 5'-phosphate + diphosphate + H(+). It catalyses the reaction a 2'-deoxyribonucleoside 5'-triphosphate + H2O = a 2'-deoxyribonucleoside 5'-phosphate + diphosphate + H(+). The enzyme catalyses dUTP + H2O = dUMP + diphosphate + H(+). The catalysed reaction is dTTP + H2O = dTMP + diphosphate + H(+). It carries out the reaction dCTP + H2O = dCMP + diphosphate + H(+). Functionally, catalyzes the hydrolysis of nucleoside triphosphates, with a preference for pyrimidine deoxynucleoside triphosphates (dUTP, dTTP and dCTP). In Salmonella paratyphi B (strain ATCC BAA-1250 / SPB7), this protein is Nucleoside triphosphatase NudI.